A 529-amino-acid chain; its full sequence is Probable biotin-dependent acyl-coenzyme A carboxylase beta2 subunit (529 aa).

Residues 20 to 271 (MSGKLDEINA…IKQGPAPAPV (252 aa)) form the CoA carboxyltransferase N-terminal domain. One can recognise a CoA carboxyltransferase C-terminal domain in the interval 270-520 (PVTEPLFDAE…SAIANGPIKG (251 aa)).

This sequence belongs to the AccD/PCCB family. In terms of assembly, the biotin-dependent acyl-CoA carboxylase complex is composed of an AccA protein, which contains the biotin carboxylase (BC) and biotin carboxyl carrier protein (BCCP) domains, and an AccD protein, which contains the carboxyl transferase (CT) domain.

Its function is as follows. Component of a biotin-dependent acyl-CoA carboxylase complex. This subunit transfers the CO2 from carboxybiotin to the CoA ester substrate. The polypeptide is Probable biotin-dependent acyl-coenzyme A carboxylase beta2 subunit (accD2) (Mycobacterium tuberculosis (strain ATCC 25618 / H37Rv)).